The chain runs to 362 residues: Thiol protease aleurain (362 aa).

Positions methionine 1–alanine 22 are cleaved as a signal peptide. Residues serine 23–alanine 143 constitute a propeptide, activation peptide. Cystine bridges form between cysteine 165-cysteine 208 and cysteine 199-cysteine 241. Cysteine 168 is a catalytic residue. N-linked (GlcNAc...) asparagine glycosylation occurs at asparagine 188. A glycan (N-linked (GlcNAc...) asparagine) is linked at asparagine 257. Cysteines 299 and 349 form a disulfide. Catalysis depends on residues histidine 308 and asparagine 328.

Belongs to the peptidase C1 family.

It localises to the vacuole. It catalyses the reaction Hydrolysis of proteins, acting as an aminopeptidase (notably, cleaving Arg-|-Xaa bonds) as well as an endopeptidase.. May play a role in proteolysis leading to mobilization of nitrogen during senescence and starvation. This is Thiol protease aleurain from Hordeum vulgare (Barley).